A 485-amino-acid polypeptide reads, in one-letter code: Leukocyte receptor cluster member 9 (485 aa).

The C3H1-type zinc-finger motif lies at 8 to 35 (SEAPAVCRFFLEGRCRFGARCRQPHPGA). A disordered region spans residues 212-247 (ETRTGLDSSLETPEVDGPTKETGLNGTTELEMPDPS).

In Mus musculus (Mouse), this protein is Leukocyte receptor cluster member 9 (Leng9).